The primary structure comprises 491 residues: Ketol-acid reductoisomerase (NADP(+)) (491 aa).

Positions 15 to 208 (AQLGKCRFMG…GGHRAGVLES (194 aa)) constitute a KARI N-terminal Rossmann domain. NADP(+) contacts are provided by residues 45–48 (CGAQ), arginine 68, arginine 76, serine 78, and 108–110 (DKQ). The active site involves histidine 132. An NADP(+)-binding site is contributed by glycine 158. KARI C-terminal knotted domains lie at 209 to 344 (SFVA…TAPQ) and 345 to 484 (YEGK…MTDM). 4 residues coordinate Mg(2+): aspartate 217, glutamate 221, glutamate 389, and glutamate 393. Serine 414 provides a ligand contact to substrate.

The protein belongs to the ketol-acid reductoisomerase family. The cofactor is Mg(2+).

The enzyme catalyses (2R)-2,3-dihydroxy-3-methylbutanoate + NADP(+) = (2S)-2-acetolactate + NADPH + H(+). The catalysed reaction is (2R,3R)-2,3-dihydroxy-3-methylpentanoate + NADP(+) = (S)-2-ethyl-2-hydroxy-3-oxobutanoate + NADPH + H(+). It functions in the pathway amino-acid biosynthesis; L-isoleucine biosynthesis; L-isoleucine from 2-oxobutanoate: step 2/4. It participates in amino-acid biosynthesis; L-valine biosynthesis; L-valine from pyruvate: step 2/4. Involved in the biosynthesis of branched-chain amino acids (BCAA). Catalyzes an alkyl-migration followed by a ketol-acid reduction of (S)-2-acetolactate (S2AL) to yield (R)-2,3-dihydroxy-isovalerate. In the isomerase reaction, S2AL is rearranged via a Mg-dependent methyl migration to produce 3-hydroxy-3-methyl-2-ketobutyrate (HMKB). In the reductase reaction, this 2-ketoacid undergoes a metal-dependent reduction by NADPH to yield (R)-2,3-dihydroxy-isovalerate. The chain is Ketol-acid reductoisomerase (NADP(+)) from Salmonella arizonae (strain ATCC BAA-731 / CDC346-86 / RSK2980).